A 557-amino-acid polypeptide reads, in one-letter code: Cytochrome P450 monooxygenase FSL4 (557 aa).

A run of 2 helical transmembrane segments spans residues 6–26 (LWLV…IFLL) and 32–52 (IVVC…YWTV). N-linked (GlcNAc...) asparagine glycans are attached at residues N127 and N393. C494 lines the heme pocket.

Belongs to the cytochrome P450 family. Requires heme as cofactor.

It is found in the membrane. Its pathway is secondary metabolite biosynthesis. Cytochrome P450 monooxygenase; part of the gene cluster that mediates the biosynthesis of fusarielins F, G and H, decaketide compounds with 5 methylations and a decaline core that act as mycoestrogens as they stimulate growth of MCF-7 breast cancer cells. The initial compound in the pathway is produced by the reducing polyketide synthase FSL1. FSL1 lacks an active enoyl reductase (ER) domain and biosynthesis of fusarielins relies on the trans-acting enoyl reductase FSL5, before it is released through hydrolysis catalyzed by the thioesterase FSL2. Fusarielins F, G, and H have a C11=C12 cis double bond and is fully reduced between C10 and C11 and between C12 and C13. FSL3 can be involved in the formation of the C11=C12 cis double bond by moving a hypothetical C10=C11 or C12=C13 trans double bond to form prefusarielin. Prefusarielin is oxygenated at C15 and C16 by FSL4, resulting in fusarielin F, which subsequently is epoxidized into fusarielin G by the same enzyme. The final step in the pathway is a reduction of the carboxylic acid moiety to yield fusarielin H via a still undetermined mechanism. In Gibberella zeae (strain ATCC MYA-4620 / CBS 123657 / FGSC 9075 / NRRL 31084 / PH-1) (Wheat head blight fungus), this protein is Cytochrome P450 monooxygenase FSL4.